Reading from the N-terminus, the 245-residue chain is 1-(5-phosphoribosyl)-5-[(5-phosphoribosylamino)methylideneamino] imidazole-4-carboxamide isomerase (245 aa).

The active-site Proton acceptor is aspartate 8. The Proton donor role is filled by aspartate 129.

The protein belongs to the HisA/HisF family.

It is found in the cytoplasm. The catalysed reaction is 1-(5-phospho-beta-D-ribosyl)-5-[(5-phospho-beta-D-ribosylamino)methylideneamino]imidazole-4-carboxamide = 5-[(5-phospho-1-deoxy-D-ribulos-1-ylimino)methylamino]-1-(5-phospho-beta-D-ribosyl)imidazole-4-carboxamide. The protein operates within amino-acid biosynthesis; L-histidine biosynthesis; L-histidine from 5-phospho-alpha-D-ribose 1-diphosphate: step 4/9. This Rhodopseudomonas palustris (strain BisA53) protein is 1-(5-phosphoribosyl)-5-[(5-phosphoribosylamino)methylideneamino] imidazole-4-carboxamide isomerase.